We begin with the raw amino-acid sequence, 178 residues long: Protein AUXIN-REGULATED GENE INVOLVED IN ORGAN SIZE (178 aa).

Residues 1–85 (MYLLSPRNGD…GGGGGSNIRE (85 aa)) are disordered. A compositionally biased stretch (acidic residues) spans 10-27 (DEEDEQEEIQELISDDEP). A compositionally biased stretch (low complexity) spans 33-47 (ASCATAASSSSSSGS). Residues 100 to 151 (FSVESLLLLVCVTASLVILPLVLPPLPPPPSMLMLVPVAMLVLLLALAFMPT) are organ Size Related (OSR) domain. A run of 2 helical transmembrane segments spans residues 105–125 (LLLL…LPPL) and 131–151 (MLML…FMPT). The disordered stretch occupies residues 153-178 (TSSSSSAGGGGGGGRNGATTGHAPYL). The span at 159–168 (AGGGGGGGRN) shows a compositional bias: gly residues. Low complexity predominate over residues 169–178 (GATTGHAPYL).

This sequence belongs to the plant organ size related (OSR) protein family. As to expression, mostly expressed in young tissues such as young roots, young leaves, and seeds. Also present in stems, mature leaves, and spikelets.

It localises to the membrane. It is found in the nucleus. Its subcellular location is the cytoplasm. The protein localises to the endoplasmic reticulum. Its function is as follows. Promotes both cell expansion and proliferation-dependent organ growth. The protein is Protein AUXIN-REGULATED GENE INVOLVED IN ORGAN SIZE (ARGOS) of Oryza sativa subsp. japonica (Rice).